The chain runs to 78 residues: Putative membrane protein insertion efficiency factor (78 aa).

This sequence belongs to the UPF0161 family.

It is found in the cell inner membrane. Could be involved in insertion of integral membrane proteins into the membrane. The sequence is that of Putative membrane protein insertion efficiency factor from Prochlorococcus marinus (strain MIT 9312).